The following is a 496-amino-acid chain: Acetyltransferase adrJ (496 aa).

Residues His-174 and Asp-421 each act as proton acceptor in the active site.

This sequence belongs to the plant acyltransferase family. In terms of assembly, monomer.

Its pathway is secondary metabolite biosynthesis; terpenoid biosynthesis. In terms of biological role, acetyltransferase; part of the gene cluster that mediates the biosynthesis of andrastins, meroterpenoid compounds that exhibit inhibitory activity against ras farnesyltransferase, suggesting that they could be promising leads for antitumor agents. The first step of the pathway is the synthesis of 3,5-dimethylorsellinic acid (DMOA) by the polyketide synthase adrD via condensation of one acetyl-CoA starter unit with 3 malonyl-CoA units and 2 methylations. DMAO is then converted to farnesyl-DMAO by the prenyltransferase adrG. The methyltransferase adrK catalyzes the methylation of the carboxyl group of farnesyl-DMAO to farnesyl-DMAO methyl ester which is further converted to epoxyfarnesyl-DMAO methyl ester by the FAD-dependent monooxygenase adrH. The terpene cyclase adrI then catalyzes the carbon skeletal rearrangement to generate the andrastin E, the first compound in the pathway having the andrastin scaffold, with the tetracyclic ring system. The post-cyclization tailoring enzymes adrF, adrE, adrJ, and adrA, are involved in the conversion of andrastin E into andrastin A. The short chain dehydrogenase adrF is responsible for the oxidation of the C-3 a hydroxyl group of andrastin E to yield the corresponding ketone, andrastin D. The ketoreductase adrE stereoselectively reduces the carbonyl moiety to reverse the stereochemistry of the C-3 position to yield andrastin F. The acetyltransferase adrJ is the acetyltransferase that attaches the acetyl group to the C-3 hydroxyl group of andrastin F to yield andrastin C. Finally, the cytochrome P450 monooxygenase adrA catalyzes two sequential oxidation reactions of the C-23 methyl group, to generate the corresponding alcohol andrastin B, and aldehyde andrastin A. This is Acetyltransferase adrJ from Penicillium roqueforti.